The sequence spans 245 residues: Leucyl/phenylalanyl-tRNA--protein transferase (245 aa).

Belongs to the L/F-transferase family.

The protein localises to the cytoplasm. The catalysed reaction is N-terminal L-lysyl-[protein] + L-leucyl-tRNA(Leu) = N-terminal L-leucyl-L-lysyl-[protein] + tRNA(Leu) + H(+). The enzyme catalyses N-terminal L-arginyl-[protein] + L-leucyl-tRNA(Leu) = N-terminal L-leucyl-L-arginyl-[protein] + tRNA(Leu) + H(+). It catalyses the reaction L-phenylalanyl-tRNA(Phe) + an N-terminal L-alpha-aminoacyl-[protein] = an N-terminal L-phenylalanyl-L-alpha-aminoacyl-[protein] + tRNA(Phe). Its function is as follows. Functions in the N-end rule pathway of protein degradation where it conjugates Leu, Phe and, less efficiently, Met from aminoacyl-tRNAs to the N-termini of proteins containing an N-terminal arginine or lysine. In Paraburkholderia xenovorans (strain LB400), this protein is Leucyl/phenylalanyl-tRNA--protein transferase.